We begin with the raw amino-acid sequence, 76 residues long: Small ribosomal subunit protein bS18 (76 aa).

It belongs to the bacterial ribosomal protein bS18 family. As to quaternary structure, part of the 30S ribosomal subunit. Forms a tight heterodimer with protein bS6.

In terms of biological role, binds as a heterodimer with protein bS6 to the central domain of the 16S rRNA, where it helps stabilize the platform of the 30S subunit. In Ectopseudomonas mendocina (strain ymp) (Pseudomonas mendocina), this protein is Small ribosomal subunit protein bS18.